The sequence spans 154 residues: Basic phospholipase A2 PC20 (154 aa).

An N-terminal signal peptide occupies residues 1-21 (MYPAHLLVLLAVCVSLLGASA). Residues 22-27 (ISPRPL) constitute a propeptide that is removed on maturation. 7 cysteine pairs are disulfide-bonded: cysteine 38–cysteine 98, cysteine 54–cysteine 143, cysteine 56–cysteine 72, cysteine 71–cysteine 125, cysteine 78–cysteine 118, cysteine 87–cysteine 111, and cysteine 105–cysteine 116. Ca(2+) is bound by residues tyrosine 55, serine 57, and glycine 59. The active site involves histidine 75. Aspartate 76 contacts Ca(2+). The active site involves aspartate 119.

The protein belongs to the phospholipase A2 family. Group I subfamily. D49 sub-subfamily. It depends on Ca(2+) as a cofactor. Expressed by the venom gland.

The protein localises to the secreted. The catalysed reaction is a 1,2-diacyl-sn-glycero-3-phosphocholine + H2O = a 1-acyl-sn-glycero-3-phosphocholine + a fatty acid + H(+). Its function is as follows. Snake venom phospholipase A2 (PLA2) that inhibits neuromuscular transmission by blocking acetylcholine release from the nerve termini. PLA2 catalyzes the calcium-dependent hydrolysis of the 2-acyl groups in 3-sn-phosphoglycerides. In Laticauda colubrina (Yellow-lipped sea krait), this protein is Basic phospholipase A2 PC20.